The sequence spans 170 residues: NADH-quinone oxidoreductase subunit B (170 aa).

Residues Cys-46, Cys-47, Cys-111, and Cys-141 each contribute to the [4Fe-4S] cluster site.

This sequence belongs to the complex I 20 kDa subunit family. As to quaternary structure, NDH-1 is composed of 14 different subunits. Subunits NuoB, C, D, E, F, and G constitute the peripheral sector of the complex. The cofactor is [4Fe-4S] cluster.

It is found in the cell membrane. It catalyses the reaction a quinone + NADH + 5 H(+)(in) = a quinol + NAD(+) + 4 H(+)(out). NDH-1 shuttles electrons from NADH, via FMN and iron-sulfur (Fe-S) centers, to quinones in the respiratory chain. The immediate electron acceptor for the enzyme in this species is believed to be a menaquinone. Couples the redox reaction to proton translocation (for every two electrons transferred, four hydrogen ions are translocated across the cytoplasmic membrane), and thus conserves the redox energy in a proton gradient. The polypeptide is NADH-quinone oxidoreductase subunit B (Geobacillus thermodenitrificans (strain NG80-2)).